We begin with the raw amino-acid sequence, 552 residues long: CTP synthase (552 aa).

The tract at residues 1-270 (MTKYVFVTGG…DRIICDELKL (270 aa)) is amidoligase domain. CTP is bound at residue serine 13. Serine 13 serves as a coordination point for UTP. ATP-binding positions include 14–19 (SLGKGI) and aspartate 71. Mg(2+) contacts are provided by aspartate 71 and glutamate 144. Residues 151 to 153 (DIE), 191 to 196 (KTKPTQ), and lysine 227 each bind CTP. Residues 191–196 (KTKPTQ) and lysine 227 contribute to the UTP site. Residues 295–547 (TIGMVGKYVD…VEAALANKQA (253 aa)) enclose the Glutamine amidotransferase type-1 domain. Glycine 356 is an L-glutamine binding site. The Nucleophile; for glutamine hydrolysis role is filled by cysteine 383. L-glutamine contacts are provided by residues 384–387 (LGMQ), glutamate 407, and arginine 473. Active-site residues include histidine 520 and glutamate 522.

Belongs to the CTP synthase family. Homotetramer.

The catalysed reaction is UTP + L-glutamine + ATP + H2O = CTP + L-glutamate + ADP + phosphate + 2 H(+). It catalyses the reaction L-glutamine + H2O = L-glutamate + NH4(+). It carries out the reaction UTP + NH4(+) + ATP = CTP + ADP + phosphate + 2 H(+). It functions in the pathway pyrimidine metabolism; CTP biosynthesis via de novo pathway; CTP from UDP: step 2/2. Allosterically activated by GTP, when glutamine is the substrate; GTP has no effect on the reaction when ammonia is the substrate. The allosteric effector GTP functions by stabilizing the protein conformation that binds the tetrahedral intermediate(s) formed during glutamine hydrolysis. Inhibited by the product CTP, via allosteric rather than competitive inhibition. In terms of biological role, catalyzes the ATP-dependent amination of UTP to CTP with either L-glutamine or ammonia as the source of nitrogen. Regulates intracellular CTP levels through interactions with the four ribonucleotide triphosphates. In Burkholderia vietnamiensis (strain G4 / LMG 22486) (Burkholderia cepacia (strain R1808)), this protein is CTP synthase.